The primary structure comprises 647 residues: Meiotically up-regulated protein C8C9.04 (647 aa).

Disordered regions lie at residues 1–241 (MTTN…ELKP) and 387–647 (RAQQ…KLFH). Polar residues predominate over residues 29-46 (KSTNAVEQNNNSSQASVT). Positions 49-67 (NKKKAAKRAKKKAAKKKKQ) are enriched in basic residues. Polar residues predominate over residues 92–103 (TILQEPGFTQTI). Over residues 134–145 (PSASTSTAVPTT) the composition is skewed to low complexity. Residues 146–155 (EARNTSITEP) show a composition bias toward polar residues. Residues 156–177 (ANSPSSSSSSASTKSTATTQSA) are compositionally biased toward low complexity. Phosphoserine is present on residues Ser-162 and Ser-165. A Phosphothreonine modification is found at Thr-168. The span at 193–215 (QLGNSPASITSKPATTSAAQPSS) shows a compositional bias: polar residues. Phosphoserine occurs at positions 197 and 200. Residues 232 to 241 (AEKEIPELKP) show a composition bias toward basic and acidic residues. Composition is skewed to polar residues over residues 390–406 (QPEQ…TETV), 413–432 (VSST…TESE), and 488–508 (PSST…AQSS). The residue at position 396 (Ser-396) is a Phosphoserine. Residues Ser-489 and Ser-490 each carry the phosphoserine modification. A Phosphothreonine modification is found at Thr-491. A phosphoserine mark is found at Ser-515, Ser-519, and Ser-523. Over residues 518–530 (ASAPSSPGTTSAA) the composition is skewed to low complexity. Residues 561–589 (GSATTIPSPGSATTKPTPGSATTKPTPVS) show a composition bias toward polar residues. The span at 596–613 (AGTTKPAPAAGATATAEN) shows a compositional bias: low complexity. A compositionally biased stretch (basic residues) spans 633–647 (SWFKRMKKSFGKLFH).

Has a role in meiosis and sporulation. The sequence is that of Meiotically up-regulated protein C8C9.04 from Schizosaccharomyces pombe (strain 972 / ATCC 24843) (Fission yeast).